The sequence spans 130 residues: Large ribosomal subunit protein eL22 (130 aa).

Positions 1–21 (MPGKTAQKGGRPSGKGKKKKQ) are disordered. Positions 17–20 (KKKK) match the Nuclear localization signal motif.

This sequence belongs to the eukaryotic ribosomal protein eL22 family.

This Tripneustes gratilla (Hawaian sea urchin) protein is Large ribosomal subunit protein eL22 (RPL22).